Reading from the N-terminus, the 568-residue chain is Zinc finger protein 583 (568 aa).

The region spanning 6–77 (LTFEDVSVNF…QKKGARDTCP (72 aa)) is the KRAB domain. 12 consecutive C2H2-type zinc fingers follow at residues 211–233 (LKCS…QRIH), 239–261 (YACV…KRIH), 267–289 (YECK…QRVH), 295–317 (YQCK…QRIH), 323–345 (FECI…QRIH), 351–373 (YVCH…QRIH), 379–401 (YECK…QRVH), 407–429 (YECK…QRVH), 435–457 (YECA…QRSH), 463–485 (YICK…QRIH), 491–513 (YECN…QRIH), and 519–541 (YECK…EKVH).

Belongs to the krueppel C2H2-type zinc-finger protein family.

It localises to the nucleus. May be involved in transcriptional regulation. The sequence is that of Zinc finger protein 583 (Znf583) from Mus musculus (Mouse).